The following is a 674-amino-acid chain: Protein kinase C delta type (674 aa).

The region spanning 1–106 is the C2 domain; the sequence is MAPFLRISFN…KNNGKAEFWL (106 aa). Phosphothreonine occurs at positions 43 and 50. Tyrosine 64 bears the Phosphotyrosine mark. Serine 130 bears the Phosphoserine mark. Threonine 141 is modified (phosphothreonine). Residue tyrosine 155 is modified to Phosphotyrosine. The segment at 158-208 adopts a Phorbol-ester/DAG-type 1 zinc-finger fold; it reads NHEFIATFFGQPTFCSVCKEFVWGLNKQGYKCRQCNAAIHKKCIDKIIGRC. The residue at position 218 (threonine 218) is a Phosphothreonine. A Phorbol-ester/DAG-type 2 zinc finger spans residues 230–280; the sequence is PHRFKVYNYMSPTFCDHCGSLLWGLVKQGLKCEDCGMNVHHKCREKVANLC. Serine 299 carries the phosphoserine; by autocatalysis modification. A phosphotyrosine; by SRC mark is found at tyrosine 311 and tyrosine 332. One can recognise a Protein kinase domain in the interval 347-601; it reads FTFQKVLGKG…TGNIRIHPFF (255 aa). 353-361 is a binding site for ATP; that stretch reads LGKGSFGKV. Tyrosine 372 bears the Phosphotyrosine mark. Lysine 376 contacts ATP. Threonine 449 is modified (phosphothreonine). Aspartate 471 acts as the Proton acceptor in catalysis. A Phosphoserine modification is found at serine 504. The residue at position 505 (threonine 505) is a Phosphothreonine; by autocatalysis. Position 565 is a phosphotyrosine (tyrosine 565). In terms of domain architecture, AGC-kinase C-terminal spans 602 to 673; sequence KTINWSLLEK…VNPKFEQFLD (72 aa). 3 positions are modified to phosphoserine: serine 643, serine 652, and serine 662.

Belongs to the protein kinase superfamily. AGC Ser/Thr protein kinase family. PKC subfamily. As to quaternary structure, interacts with PDPK1 (via N-terminal region). Interacts with RAD9A. Interacts with CDCP1. Interacts with MUC1. Interacts with VASP. Interacts with CAVIN3. Interacts with PRKD2 (via N-terminus and zing-finger domain 1 and 2) in response to oxidative stress; the interaction is independent of PRKD2 tyrosine phosphorylation. Interacts with PLSC3; interaction is enhanced by UV irradiation. In terms of processing, autophosphorylated and/or phosphorylated at Thr-505, within the activation loop; phosphorylation at Thr-505 is not a prerequisite for enzymatic activity. Autophosphorylated at Ser-299. Upon TNFSF10/TRAIL treatment, phosphorylated at Tyr-155; phosphorylation is required for its translocation to the endoplasmic reticulum and cleavage by caspase-3. Phosphorylated at Tyr-311, Tyr-332 and Tyr-565; phosphorylation of Tyr-311 and Tyr-565 following thrombin or zymosan stimulation potentiates its kinase activity. Phosphorylated by protein kinase PDPK1; phosphorylation is inhibited by the apoptotic C-terminal cleavage product of PKN2. Phosphorylated at Tyr-311 through a SYK and SRC mechanism downstream of C-type lectin receptors activation, promoting its activation. Post-translationally, proteolytically cleaved into a catalytic subunit and a regulatory subunit by caspase-3 during apoptosis which results in kinase activation. Isoform 1 is highly expressed in developing pro- and pre-B-cells and moderately in mature T-cells. Isoform 2 is highly expressed in testis and ovary and at a lower level in thymocytes, brain and kidney.

The protein localises to the cytoplasm. It is found in the perinuclear region. The protein resides in the nucleus. It localises to the cell membrane. Its subcellular location is the mitochondrion. The protein localises to the endomembrane system. It carries out the reaction L-seryl-[protein] + ATP = O-phospho-L-seryl-[protein] + ADP + H(+). The catalysed reaction is L-threonyl-[protein] + ATP = O-phospho-L-threonyl-[protein] + ADP + H(+). The enzyme catalyses L-tyrosyl-[protein] + ATP = O-phospho-L-tyrosyl-[protein] + ADP + H(+). Novel PKCs (PRKCD, PRKCE, PRKCH and PRKCQ) are calcium-insensitive, but activated by diacylglycerol (DAG) and phosphatidylserine. Three specific sites; Thr-505 (activation loop of the kinase domain), Ser-643 (turn motif) and Ser-662 (hydrophobic region), need to be phosphorylated for its full activation. Activated by caspase-3 (CASP3) cleavage during apoptosis. After cleavage, the pseudosubstrate motif in the regulatory subunit is released from the substrate recognition site of the catalytic subunit, which enables PRKCD to become constitutively activated. The catalytic subunit which displays properties of a sphingosine-dependent protein kinase is activated by D-erythro-sphingosine (Sph) or N,N-dimethyl-D-erythrosphingosine (DMS) or N,N,N-trimethyl-D-erythrosphingosine (TMS), but not by ceramide or Sph-1-P and is strongly inhibited by phosphatidylserine. Functionally, calcium-independent, phospholipid- and diacylglycerol (DAG)-dependent serine/threonine-protein kinase that plays contrasting roles in cell death and cell survival by functioning as a pro-apoptotic protein during DNA damage-induced apoptosis, but acting as an anti-apoptotic protein during cytokine receptor-initiated cell death, is involved in tumor suppression, is required for oxygen radical production by NADPH oxidase and acts as a positive or negative regulator in platelet functional responses. Negatively regulates B cell proliferation and also has an important function in self-antigen induced B cell tolerance induction. Upon DNA damage, activates the promoter of the death-promoting transcription factor BCLAF1/Btf to trigger BCLAF1-mediated p53/TP53 gene transcription and apoptosis. In response to oxidative stress, interact with and activate CHUK/IKKA in the nucleus, causing the phosphorylation of p53/TP53. In the case of ER stress or DNA damage-induced apoptosis, can form a complex with the tyrosine-protein kinase ABL1 which trigger apoptosis independently of p53/TP53. In cytosol can trigger apoptosis by activating MAPK11 or MAPK14, inhibiting AKT1 and decreasing the level of X-linked inhibitor of apoptosis protein (XIAP), whereas in nucleus induces apoptosis via the activation of MAPK8 or MAPK9. Upon ionizing radiation treatment, is required for the activation of the apoptosis regulators BAX and BAK, which trigger the mitochondrial cell death pathway. Can phosphorylate MCL1 and target it for degradation which is sufficient to trigger for BAX activation and apoptosis. Is required for the control of cell cycle progression both at G1/S and G2/M phases. Mediates phorbol 12-myristate 13-acetate (PMA)-induced inhibition of cell cycle progression at G1/S phase by up-regulating the CDK inhibitor CDKN1A/p21 and inhibiting the cyclin CCNA2 promoter activity. In response to UV irradiation can phosphorylate CDK1, which is important for the G2/M DNA damage checkpoint activation. Can protect glioma cells from the apoptosis induced by TNFSF10/TRAIL, probably by inducing increased phosphorylation and subsequent activation of AKT1. Can also act as tumor suppressor upon mitogenic stimulation with PMA or TPA. In N-formyl-methionyl-leucyl-phenylalanine (fMLP)-treated cells, is required for NCF1 (p47-phox) phosphorylation and activation of NADPH oxidase activity, and regulates TNF-elicited superoxide anion production in neutrophils, by direct phosphorylation and activation of NCF1 or indirectly through MAPK1/3 (ERK1/2) signaling pathways. Involved in antifungal immunity by mediating phosphorylation and activation of CARD9 downstream of C-type lectin receptors activation, promoting interaction between CARD9 and BCL10, followed by activation of NF-kappa-B and MAP kinase p38 pathways. May also play a role in the regulation of NADPH oxidase activity in eosinophil after stimulation with IL5, leukotriene B4 or PMA. In collagen-induced platelet aggregation, acts a negative regulator of filopodia formation and actin polymerization by interacting with and negatively regulating VASP phosphorylation. Downstream of PAR1, PAR4 and CD36/GP4 receptors, regulates differentially platelet dense granule secretion; acts as a positive regulator in PAR-mediated granule secretion, whereas it negatively regulates CD36/GP4-mediated granule release. Phosphorylates MUC1 in the C-terminal and regulates the interaction between MUC1 and beta-catenin. The catalytic subunit phosphorylates 14-3-3 proteins (YWHAB, YWHAZ and YWHAH) in a sphingosine-dependent fashion. Phosphorylates ELAVL1 in response to angiotensin-2 treatment. Phosphorylates mitochondrial phospholipid scramblase 3 (PLSCR3), resulting in increased cardiolipin expression on the mitochondrial outer membrane which facilitates apoptosis. Phosphorylates SMPD1 which induces SMPD1 secretion. This Mus musculus (Mouse) protein is Protein kinase C delta type.